A 259-amino-acid polypeptide reads, in one-letter code: Haloacid dehalogenase-like hydrolase domain-containing protein 2 (259 aa).

2 residues coordinate Mg(2+): D13 and S15. Residues 13 to 15 (DLS) and 46 to 47 (TN) contribute to the substrate site. Residues 47 to 71 (NTTKESKQDLLERLRKLEFDISEDE) adopt a coiled-coil conformation. Residue K50 is modified to N6-succinyllysine. Residue K179 participates in substrate binding. D204 is a binding site for Mg(2+).

The protein belongs to the HAD-like hydrolase superfamily. It depends on Mg(2+) as a cofactor.

The chain is Haloacid dehalogenase-like hydrolase domain-containing protein 2 (HDHD2) from Pongo abelii (Sumatran orangutan).